Here is a 167-residue protein sequence, read N- to C-terminus: 2-C-methyl-D-erythritol 2,4-cyclodiphosphate synthase (167 aa).

A divalent metal cation is bound by residues D9 and H11. 4-CDP-2-C-methyl-D-erythritol 2-phosphate-binding positions include 9-11 (DVH) and 35-36 (HS). A divalent metal cation is bound at residue H43. Residues 57–59 (DIG), 62–66 (FPDTD), 133–136 (TTTE), F140, and R143 each bind 4-CDP-2-C-methyl-D-erythritol 2-phosphate.

Belongs to the IspF family. In terms of assembly, homotrimer. Requires a divalent metal cation as cofactor.

It carries out the reaction 4-CDP-2-C-methyl-D-erythritol 2-phosphate = 2-C-methyl-D-erythritol 2,4-cyclic diphosphate + CMP. It functions in the pathway isoprenoid biosynthesis; isopentenyl diphosphate biosynthesis via DXP pathway; isopentenyl diphosphate from 1-deoxy-D-xylulose 5-phosphate: step 4/6. Involved in the biosynthesis of isopentenyl diphosphate (IPP) and dimethylallyl diphosphate (DMAPP), two major building blocks of isoprenoid compounds. Catalyzes the conversion of 4-diphosphocytidyl-2-C-methyl-D-erythritol 2-phosphate (CDP-ME2P) to 2-C-methyl-D-erythritol 2,4-cyclodiphosphate (ME-CPP) with a corresponding release of cytidine 5-monophosphate (CMP). This Glaesserella parasuis serovar 5 (strain SH0165) (Haemophilus parasuis) protein is 2-C-methyl-D-erythritol 2,4-cyclodiphosphate synthase.